Here is a 389-residue protein sequence, read N- to C-terminus: 26S proteasome regulatory subunit 10B (389 aa).

At Lys-72 the chain carries N6-acetyllysine. 174–181 serves as a coordination point for ATP; sequence GPPGTGKT. Lys-206 bears the N6-acetyllysine mark. Residue Ser-244 is modified to Phosphoserine.

Belongs to the AAA ATPase family. In terms of assembly, component of the 19S proteasome regulatory particle complex. The 26S proteasome consists of a 20S core particle (CP) and two 19S regulatory subunits (RP). The regulatory particle is made of a lid composed of 9 subunits, a base containing 6 ATPases including PSMC6 and few additional components. Interacts with PAAF1.

It localises to the cytoplasm. The protein localises to the nucleus. Component of the 26S proteasome, a multiprotein complex involved in the ATP-dependent degradation of ubiquitinated proteins. This complex plays a key role in the maintenance of protein homeostasis by removing misfolded or damaged proteins, which could impair cellular functions, and by removing proteins whose functions are no longer required. Therefore, the proteasome participates in numerous cellular processes, including cell cycle progression, apoptosis, or DNA damage repair. PSMC6 belongs to the heterohexameric ring of AAA (ATPases associated with diverse cellular activities) proteins that unfolds ubiquitinated target proteins that are concurrently translocated into a proteolytic chamber and degraded into peptides. The chain is 26S proteasome regulatory subunit 10B (PSMC6) from Bos taurus (Bovine).